We begin with the raw amino-acid sequence, 310 residues long: Thiamine-monophosphate kinase (310 aa).

Mg(2+) is bound by residues Asp24, Thr38, and Asp39. Residue Asp46 participates in substrate binding. Mg(2+)-binding residues include Asp67 and Asp115. ATP is bound by residues 114–115 and Arg138; that span reads GD. Residue Asp203 coordinates Mg(2+). Ser205 lines the ATP pocket. A Mg(2+)-binding site is contributed by Asp206. Glu251 and Trp306 together coordinate substrate.

This sequence belongs to the thiamine-monophosphate kinase family.

The catalysed reaction is thiamine phosphate + ATP = thiamine diphosphate + ADP. It functions in the pathway cofactor biosynthesis; thiamine diphosphate biosynthesis; thiamine diphosphate from thiamine phosphate: step 1/1. Catalyzes the ATP-dependent phosphorylation of thiamine-monophosphate (TMP) to form thiamine-pyrophosphate (TPP), the active form of vitamin B1. This is Thiamine-monophosphate kinase from Nitrosopumilus maritimus (strain SCM1).